The sequence spans 255 residues: Putative cysteine-rich repeat secretory protein 13 (255 aa).

The N-terminal stretch at 1–21 (MSSNILAMVAMQLLLIRIVSS) is a signal peptide. Gnk2-homologous domains follow at residues 28–136 (YLNH…SVNT) and 142–252 (YDSF…LYPF).

It belongs to the cysteine-rich repeat secretory protein family.

The protein localises to the secreted. In Arabidopsis thaliana (Mouse-ear cress), this protein is Putative cysteine-rich repeat secretory protein 13 (CRRSP13).